The sequence spans 485 residues: Ribulose bisphosphate carboxylase large chain 2 (485 aa).

Substrate-binding residues include Asn-124 and Thr-174. Lys-176 acts as the Proton acceptor in catalysis. Lys-178 is a binding site for substrate. Mg(2+) contacts are provided by Lys-202, Asp-204, and Glu-205. At Lys-202 the chain carries N6-carboxylysine. The Proton acceptor role is filled by His-294. Substrate-binding residues include Arg-295, His-327, and Ser-379.

The protein belongs to the RuBisCO large chain family. Type I subfamily. As to quaternary structure, heterohexadecamer of 8 large chains and 8 small chains. It depends on Mg(2+) as a cofactor.

The enzyme catalyses 2 (2R)-3-phosphoglycerate + 2 H(+) = D-ribulose 1,5-bisphosphate + CO2 + H2O. It carries out the reaction D-ribulose 1,5-bisphosphate + O2 = 2-phosphoglycolate + (2R)-3-phosphoglycerate + 2 H(+). In terms of biological role, ruBisCO catalyzes two reactions: the carboxylation of D-ribulose 1,5-bisphosphate, the primary event in carbon dioxide fixation, as well as the oxidative fragmentation of the pentose substrate. Both reactions occur simultaneously and in competition at the same active site. The chain is Ribulose bisphosphate carboxylase large chain 2 from Rhodopseudomonas palustris (strain BisB5).